Reading from the N-terminus, the 167-residue chain is Protein-export protein SecB (167 aa).

Positions 1–20 are disordered; that stretch reads MASNDDAPVGAANGNGNTGA.

This sequence belongs to the SecB family. As to quaternary structure, homotetramer, a dimer of dimers. One homotetramer interacts with 1 SecA dimer.

The protein resides in the cytoplasm. Functionally, one of the proteins required for the normal export of preproteins out of the cell cytoplasm. It is a molecular chaperone that binds to a subset of precursor proteins, maintaining them in a translocation-competent state. It also specifically binds to its receptor SecA. This is Protein-export protein SecB from Mesorhizobium japonicum (strain LMG 29417 / CECT 9101 / MAFF 303099) (Mesorhizobium loti (strain MAFF 303099)).